The sequence spans 201 residues: Dermatopontin (201 aa).

The first 18 residues, Met1–Gly18, serve as a signal peptide directing secretion. At Gln19 the chain carries Pyrrolidone carboxylic acid. Position 23 is a sulfotyrosine (Tyr23). A run of 4 repeats spans residues Pro26 to Pro79, Asp70 to Tyr75, Thr80 to Tyr135, and Asp125 to Phe130. The interval Pro26–Phe186 is 2 X 53-55 AA tandem repeats. Cystine bridges form between Cys50/Cys77, Cys90/Cys132, Cys106/Cys133, Cys139/Cys196, and Cys143/Cys189. The 3 X 6 AA repeats of D-R-[EQ]-W-[NQK]-[FY] stretch occupies residues Asp70 to Phe186. Sulfotyrosine occurs at positions 162, 164, 166, and 167. The stretch at Asp181–Phe186 is one 3-3 repeat. Tyr194 is subject to Sulfotyrosine.

This sequence belongs to the dermatopontin family. As to quaternary structure, interacts with TGFB1, DCN and collagen. In terms of processing, sulfated on tyrosine residue(s). In terms of tissue distribution, expressed in fibroblasts, heart, skeletal muscle, brain and pancreas. Expressed at an intermediate level in lung and kidney, and at a low level in liver and placenta. Expressed at a lower level in fibroblasts from hypertrophic scar lesional skin and in fibroblasts from patients with systemic sclerosis than in normal skin fibroblasts.

It is found in the secreted. It localises to the extracellular space. The protein resides in the extracellular matrix. Its function is as follows. Seems to mediate adhesion by cell surface integrin binding. May serve as a communication link between the dermal fibroblast cell surface and its extracellular matrix environment. Enhances TGFB1 activity. Inhibits cell proliferation. Accelerates collagen fibril formation, and stabilizes collagen fibrils against low-temperature dissociation. The polypeptide is Dermatopontin (DPT) (Homo sapiens (Human)).